Here is a 239-residue protein sequence, read N- to C-terminus: Large ribosomal subunit protein uL3 (239 aa).

Residue Gln151 is modified to N5-methylglutamine.

It belongs to the universal ribosomal protein uL3 family. Part of the 50S ribosomal subunit. Forms a cluster with proteins L14 and L19. Methylated by PrmB.

In terms of biological role, one of the primary rRNA binding proteins, it binds directly near the 3'-end of the 23S rRNA, where it nucleates assembly of the 50S subunit. This Ruegeria sp. (strain TM1040) (Silicibacter sp.) protein is Large ribosomal subunit protein uL3.